Here is a 252-residue protein sequence, read N- to C-terminus: Sororin (252 aa).

Disordered stretches follow at residues 1–48 and 72–142; these read MSGR…WPKT and AVQS…SKKV. Ser-21, Ser-33, Ser-35, Ser-75, Ser-79, and Ser-83 each carry phosphoserine. A compositionally biased stretch (basic and acidic residues) spans 86–104; sequence LEKENEPPGRELTKEDLFK. The short motif at 88–90 is the KEN box element; sequence KEN. The residue at position 98 (Thr-98) is a Phosphothreonine. Low complexity predominate over residues 105–116; sequence THSVPATPTSTP. Position 107 is a phosphoserine (Ser-107). Thr-111 and Thr-115 each carry phosphothreonine. Residues 124–140 are compositionally biased toward basic and acidic residues; the sequence is SSSKEGELDARDLEMSK. Ser-154 bears the Phosphoserine mark. A Phosphothreonine modification is found at Thr-159. Positions 166 to 168 match the FGF motif motif; sequence FGF. Residues 199–222 form a disordered region; the sequence is WAPDMTLPGISPPPEKQKRKKKKM. Residue Ser-209 is modified to Phosphoserine. Residues 230 to 252 form a C-terminal Sororin domain region; the sequence is LDEWAAAMNAEFEAAEQFDLLVE.

It belongs to the sororin family. As to quaternary structure, interacts with the APC/C complex. Interacts with the chromatin-bound cohesin complex; the interaction is indirect, occurs after DNA replication and requires acetylation of the cohesin component SMC3. Interacts (via the FGF motif) with PDS5A and PDS5B; the interaction is direct and prevents the interaction of PDS5A with WAPL. In terms of processing, phosphorylated. Phosphorylation, as cells enter mitosis, disrupts the interaction with PDS5A and relieves the inhibition of WAPL by CDCA5. Ubiquitinated by the APC/C complex in G1, leading to its degradation.

It localises to the nucleus. The protein resides in the chromosome. The protein localises to the cytoplasm. In terms of biological role, regulator of sister chromatid cohesion in mitosis stabilizing cohesin complex association with chromatin. May antagonize the action of WAPL which stimulates cohesin dissociation from chromatin. Cohesion ensures that chromosome partitioning is accurate in both meiotic and mitotic cells and plays an important role in DNA repair. Required for efficient DNA double-stranded break repair. This chain is Sororin (CDCA5), found in Homo sapiens (Human).